Consider the following 667-residue polypeptide: Endogenous retrovirus group K member 5 Gag polyprotein (667 aa).

A lipid anchor (N-myristoyl glycine) is attached at Gly2. The interval 166–188 (KGPELVGPSESKPRGPSPLPAGQ) is disordered. CCHC-type zinc fingers lie at residues 543 to 560 (KKCYNCGQIGHLKRSCPV) and 580 to 597 (GLCPKCGKGKHWANQCHS). The segment at 598–667 (KFDKDGQPLS…CPAPQQAAPQ (70 aa)) is disordered. Residues 648-667 (GVSQLQQSNSCPAPQQAAPQ) are compositionally biased toward polar residues.

It belongs to the beta type-B retroviral Gag protein family. HERV class-II K(HML-2) gag subfamily. In terms of processing, myristoylation is essential for retroviral assembly. Alteration of the glycine residue leads to a block in the budding of particles and an accumulation of Gag inside the cell. Post-translationally, specific enzymatic cleavages may yield mature proteins.

It is found in the cell membrane. Its function is as follows. The products of the Gag polyproteins of infectious retroviruses perform highly complex orchestrated tasks during the assembly, budding, maturation, and infection stages of the viral replication cycle. During viral assembly, the proteins form membrane associations and self-associations that ultimately result in budding of an immature virion from the infected cell. Gag precursors also function during viral assembly to selectively bind and package two plus strands of genomic RNA. Endogenous Gag proteins may have kept, lost or modified their original function during evolution. This chain is Endogenous retrovirus group K member 5 Gag polyprotein (ERVK-5), found in Homo sapiens (Human).